We begin with the raw amino-acid sequence, 301 residues long: GTPase Era (301 aa).

The Era-type G domain occupies Tyr7–Glu175. The segment at Gly15–Ser22 is G1. GTP is bound at residue Gly15–Ser22. The interval Gln41–His45 is G2. Positions Asp62 to Gly65 are G3. Residues Asp62–Leu66 and Asn124–Asp127 contribute to the GTP site. A G4 region spans residues Asn124–Asp127. The interval Leu154–Ala156 is G5. A KH type-2 domain is found at Ile198–Ser283.

Belongs to the TRAFAC class TrmE-Era-EngA-EngB-Septin-like GTPase superfamily. Era GTPase family. Monomer.

The protein resides in the cytoplasm. It is found in the cell inner membrane. Functionally, an essential GTPase that binds both GDP and GTP, with rapid nucleotide exchange. Plays a role in 16S rRNA processing and 30S ribosomal subunit biogenesis and possibly also in cell cycle regulation and energy metabolism. This is GTPase Era from Enterobacter sp. (strain 638).